Consider the following 152-residue polypeptide: uncharacterized protein (152 aa).

This is an uncharacterized protein from Acheta domesticus (House cricket).